The primary structure comprises 452 residues: Pup--protein ligase (452 aa).

Position 9 (Glu-9) interacts with Mg(2+). Arg-53 is an ATP binding site. Tyr-55 is a Mg(2+) binding site. The Proton acceptor role is filled by Asp-57. Glu-63 lines the Mg(2+) pocket. Residues Thr-66 and Trp-419 each coordinate ATP.

It belongs to the Pup ligase/Pup deamidase family. Pup-conjugating enzyme subfamily.

The enzyme catalyses ATP + [prokaryotic ubiquitin-like protein]-L-glutamate + [protein]-L-lysine = ADP + phosphate + N(6)-([prokaryotic ubiquitin-like protein]-gamma-L-glutamyl)-[protein]-L-lysine.. Its pathway is protein degradation; proteasomal Pup-dependent pathway. It functions in the pathway protein modification; protein pupylation. Functionally, catalyzes the covalent attachment of the prokaryotic ubiquitin-like protein modifier Pup to the proteasomal substrate proteins, thereby targeting them for proteasomal degradation. This tagging system is termed pupylation. The ligation reaction involves the side-chain carboxylate of the C-terminal glutamate of Pup and the side-chain amino group of a substrate lysine. This is Pup--protein ligase from Acidothermus cellulolyticus (strain ATCC 43068 / DSM 8971 / 11B).